A 122-amino-acid polypeptide reads, in one-letter code: Large ribosomal subunit protein uL14 (122 aa).

This sequence belongs to the universal ribosomal protein uL14 family. In terms of assembly, part of the 50S ribosomal subunit. Forms a cluster with proteins L3 and L19. In the 70S ribosome, L14 and L19 interact and together make contacts with the 16S rRNA in bridges B5 and B8.

In terms of biological role, binds to 23S rRNA. Forms part of two intersubunit bridges in the 70S ribosome. This is Large ribosomal subunit protein uL14 from Nitrosomonas europaea (strain ATCC 19718 / CIP 103999 / KCTC 2705 / NBRC 14298).